The primary structure comprises 483 residues: Regulatory protein ViaA (483 aa).

The protein belongs to the ViaA family. In terms of assembly, homodimer. Interacts with RavA.

It localises to the cytoplasm. Component of the RavA-ViaA chaperone complex, which may act on the membrane to optimize the function of some of the respiratory chains. ViaA stimulates the ATPase activity of RavA. In Shigella sonnei (strain Ss046), this protein is Regulatory protein ViaA.